The chain runs to 277 residues: DNA adenine methylase (277 aa).

S-adenosyl-L-methionine-binding residues include W10, K14, D54, and D181.

This sequence belongs to the N(4)/N(6)-methyltransferase family.

The enzyme catalyses a 2'-deoxyadenosine in DNA + S-adenosyl-L-methionine = an N(6)-methyl-2'-deoxyadenosine in DNA + S-adenosyl-L-homocysteine + H(+). Its function is as follows. An alpha subtype methylase, recognizes the double-stranded sequence 5'-GATC-3' and methylates A-2. May be involved in methyl-directed DNA mismatch repair, initiation of chromosome replication and gene expression. This Vibrio cholerae serotype O1 (strain ATCC 39541 / Classical Ogawa 395 / O395) protein is DNA adenine methylase.